Consider the following 1482-residue polypeptide: MQRSPLEKASVISKLFFSWTIPILKKGYRQRLELSDIYQISSADSADNLSEKLEREWDRELASKKNPKLINALQRCFFWRFTFYGILLYLGEVTKAIQPLLLGRIIASYDPDNKMERSIAIYLGIGLCLLFIMRTLLLHPAIFGLHHIGMQMRIALFSLIYKKTLKLSSRVLDKISIGQLVSLLSNNLNKFDEGLALAHFVWIAPLQVMLLMGLLWELLQASAFCGLAFLIVLALLQAGLGRMMMKYRDQRAGKINERLVITSEMIENIQSVKAYCWEEAMEKMIENLRQTELRLTRKAAYVRYVNSSAFFFSGFFVVFLSVLPYALIKGIILRKIFTTISFCIVLRMAVTRQFPWAVQTWYDSLGAINKIQEFLQKQEHKTLEYNLTTTEVVMENVTAFWEEGVGELFENAKQNNNSGNISSGDNRLFFSNFAILSTPVLRGINFKVERGQLLAVAGSTGAGKTSLLMMIMGELEPSEGKIKHSGRISFCSQFSWIMPGTIKENIIFGVSYDEYRYRSVIKACQLEEDISKFAEKDNIVLGEGGITLSGGQRARISLARAVYKDADLYLLDSPFGYLDVLTEKEIFERCVCKLMANKTRILVTSKMEHLKKADKILILHEGSSYFYGTFSELLNLRPDFSSKLMGYDSFDQFSAERRNSILTETLRRFSFEGDAAGPWNEPKKQSFKQTGEFGEKRKSSVLNPINAIKRFSIVQKTPLQMNGIEEDSEESSERRLSLVPDSEQGETILPRSNLINTGPTFQGRRRQSVLNLMTHSSVNQGQIVHRSTAASTRKMSLAPQENFTEMDIYSRRLSQDNGLEISEEINEEDLKECLFDDLESIPAVTTWNTYLRYITVHKNLIFVLIWCLVIFLAEVAASLVAFWLIEKTRPQDKGNSTRSTNNTSPVIITSTSAFYMFYIYVGVADSLLALGFLRGLPLVHTLITVSKILHQKMLHSVLHAPMSTLNTLKAGAILNRFSKDIAILDDLLPLTIFDFIQLVLIVIGAVVVVSILKPYIFLAAVPVIIAFVILRAYFLQTSQQLKQLESEGRSPIFTHLVTSLKGLWTLRAFGRQPYFETLFHKALNLHTATWFLYLSTLRWFQMRIEMIFVVFFVAVTFISILTTGEGEGTVGIILTLAMNIMSTLQWAVNSSIDVDSLMRSVSRVFKFIDMPAEESKYTKSVKPYKDGQLSKVMILENQHVKKDDIWPSGGQITVKDLTAKYIDGGNAILENISFSISPGQRVGLLGRTGSGKSTLLSALLRLLNTEGEIQVDGVSWESVTVQQWRRAFGVIPQKVFIFSGTFRKNLDPYGQWNDQEIWKVADEVGLRSVIEQFPGNLDFVLVDGGFVLSHGHKQLMCLARSVLSKAKILLLDEPSAHLDPITYQIIRRALKQAFADCTVILCEHRIEAMLECQRFLVIEENKVRQYDSMQKLLSEKSLFQQAISPSDRLKLFPQRSSSKHRSRAQITALKEEAEEEVQDTRL.

The Cytoplasmic segment spans residues methionine 1–phenylalanine 77. A helical membrane pass occupies residues phenylalanine 78 to glutamine 98. The 285-residue stretch at phenylalanine 81–leucine 365 folds into the ABC transmembrane type-1 1 domain. The Extracellular portion of the chain corresponds to proline 99 to tyrosine 122. A helical transmembrane segment spans residues leucine 123–histidine 146. At histidine 147–leucine 195 the chain is on the cytoplasmic side. A helical membrane pass occupies residues alanine 196–tryptophan 216. Over glutamate 217–serine 222 the chain is Extracellular. The helical transmembrane segment at alanine 223–methionine 243 threads the bilayer. At methionine 244–lysine 298 the chain is on the cytoplasmic side. Residues alanine 299 to phenylalanine 319 form a helical membrane-spanning segment. The Extracellular portion of the chain corresponds to leucine 320–threonine 339. A helical transmembrane segment spans residues isoleucine 340–valine 358. Topologically, residues glutamine 359–asparagine 859 are cytoplasmic. ATP-binding positions include tryptophan 401, glycine 458–threonine 465, and glutamine 493. The 224-residue stretch at serine 423–glycine 646 folds into the ABC transporter 1 domain. Cysteine 524 carries S-palmitoyl cysteine lipidation. A phosphoserine mark is found at serine 549 and serine 660. The segment at serine 654–glutamate 832 is disordered R region. The residue at position 670 (serine 670) is a Phosphoserine; by PKA. Serine 686 carries the phosphoserine modification. A Glycyl lysine isopeptide (Lys-Gly) (interchain with G-Cter in ubiquitin) cross-link involves residue lysine 688. Phosphoserine is present on residues serine 700 and serine 712. The residue at position 717 (threonine 717) is a Phosphothreonine. A phosphoserine mark is found at serine 737, serine 768, serine 791, serine 796, and serine 814. The helical transmembrane segment at leucine 860–valine 880 threads the bilayer. Positions leucine 860–serine 1156 constitute an ABC transmembrane type-1 2 domain. The Extracellular portion of the chain corresponds to alanine 881–isoleucine 919. N-linked (GlcNAc...) asparagine glycans are attached at residues asparagine 895 and asparagine 901. A discontinuously helical transmembrane segment spans residues tyrosine 920 to histidine 940. At threonine 941 to threonine 991 the chain is on the cytoplasmic side. The helical transmembrane segment at isoleucine 992–leucine 1012 threads the bilayer. Topologically, residues lysine 1013–proline 1014 are extracellular. Residues tyrosine 1015–leucine 1035 traverse the membrane as a helical segment. Over glutamine 1036–threonine 1096 the chain is Cytoplasmic. The chain crosses the membrane as a helical span at residues leucine 1097–phenylalanine 1117. Over isoleucine 1118 to glycine 1131 the chain is Extracellular. Residues isoleucine 1132–isoleucine 1152 form a helical membrane-spanning segment. Over aspartate 1153–leucine 1482 the chain is Cytoplasmic. The ABC transporter 2 domain occupies isoleucine 1212 to proline 1445. Residues tyrosine 1221 and glycine 1246–serine 1253 contribute to the ATP site. Residues arginine 1388 to leucine 1482 form an interaction with GORASP2 region. A lipid anchor (S-palmitoyl cysteine) is attached at cysteine 1397. 2 positions are modified to phosphoserine: serine 1446 and serine 1458. Residues glutamine 1454–leucine 1482 form a disordered region. Acidic residues predominate over residues glutamate 1472–leucine 1482. Positions threonine 1480–leucine 1482 match the PDZ-binding motif.

The protein belongs to the ABC transporter superfamily. ABCC family. CFTR transporter (TC 3.A.1.202) subfamily. Monomer; does not require oligomerization for channel activity. May form oligomers in the membrane. Interacts with SLC26A3, SLC26A6 and NHERF1. Interacts with SHANK2. Interacts with MYO6. Interacts (via C-terminus) with GOPC (via PDZ domain); this promotes CFTR internalization and thereby decreases channel activity. Interacts with SLC4A7 through NHERF1. Found in a complex with MYO5B and RAB11A. Interacts with ANO1. Interacts with SLC26A8. Interacts with AHCYL1; the interaction increases CFTR activity. Interacts with CSE1L. The core-glycosylated form interacts with GORASP2 (via PDZ GRASP-type 1 domain) in respone to ER stress. Interacts with MARCHF2; the interaction leads to CFTR ubiqtuitination and degradation. Interacts with ADGRG2. In terms of processing, N-glycosylated. Phosphorylated; cAMP treatment promotes phosphorylation and activates the channel. Dephosphorylation decreases the ATPase activity (in vitro). Phosphorylation at PKA sites activates the channel. Phosphorylation at PKC sites enhances the response to phosphorylation by PKA. Phosphorylated by AMPK; this inhibits channel activity. Post-translationally, ubiquitinated, leading to its degradation in the lysosome. Deubiquitination by USP10 in early endosomes enhances its endocytic recycling to the cell membrane. Ubiquitinated by RNF185 during ER stress. Ubiquitinated by MARCHF2.

The protein localises to the apical cell membrane. It is found in the early endosome membrane. The protein resides in the cell membrane. It localises to the recycling endosome membrane. Its subcellular location is the endoplasmic reticulum membrane. The protein localises to the nucleus. It catalyses the reaction ATP + H2O + closed Cl(-) channel = ADP + phosphate + open Cl(-) channel.. It carries out the reaction chloride(in) = chloride(out). The catalysed reaction is hydrogencarbonate(in) = hydrogencarbonate(out). The enzyme catalyses ATP + H2O = ADP + phosphate + H(+). In terms of biological role, epithelial ion channel that plays an important role in the regulation of epithelial ion and water transport and fluid homeostasis. Mediates the transport of chloride ions across the cell membrane. Possesses an intrinsic ATPase activity and utilizes ATP to gate its channel; the passive flow of anions through the channel is gated by cycles of ATP binding and hydrolysis by the ATP-binding domains. The ion channel is also permeable to HCO(3)(-); selectivity depends on the extracellular chloride concentration. Exerts its function also by modulating the activity of other ion channels and transporters. Contributes to the regulation of the pH and the ion content of the epithelial fluid layer. Modulates the activity of the epithelial sodium channel (ENaC) complex, in part by regulating the cell surface expression of the ENaC complex. May regulate bicarbonate secretion and salvage in epithelial cells by regulating the transporter SLC4A7. Can inhibit the chloride channel activity of ANO1. Plays a role in the chloride and bicarbonate homeostasis during sperm epididymal maturation and capacitation. This chain is Cystic fibrosis transmembrane conductance regulator, found in Rhinolophus ferrumequinum (Greater horseshoe bat).